A 236-amino-acid polypeptide reads, in one-letter code: 2,3,4,5-tetrahydropyridine-2,6-dicarboxylate N-acetyltransferase (236 aa).

Belongs to the transferase hexapeptide repeat family. DapH subfamily.

The enzyme catalyses (S)-2,3,4,5-tetrahydrodipicolinate + acetyl-CoA + H2O = L-2-acetamido-6-oxoheptanedioate + CoA. Its pathway is amino-acid biosynthesis; L-lysine biosynthesis via DAP pathway; LL-2,6-diaminopimelate from (S)-tetrahydrodipicolinate (acetylase route): step 1/3. Its function is as follows. Catalyzes the transfer of an acetyl group from acetyl-CoA to tetrahydrodipicolinate. This chain is 2,3,4,5-tetrahydropyridine-2,6-dicarboxylate N-acetyltransferase, found in Clostridium botulinum (strain ATCC 19397 / Type A).